Consider the following 221-residue polypeptide: Lipoprotein-releasing system ATP-binding protein LolD (221 aa).

Positions 8–220 (LKMISKHYKQ…YNLKHGLLNI (213 aa)) constitute an ABC transporter domain. 42-49 (GSSGSGKS) is an ATP binding site.

The protein belongs to the ABC transporter superfamily. Lipoprotein translocase (TC 3.A.1.125) family. In terms of assembly, the complex is composed of two ATP-binding proteins (LolD) and two transmembrane proteins (LolC and LolE).

Its subcellular location is the cell inner membrane. Its function is as follows. Part of the ABC transporter complex LolCDE involved in the translocation of mature outer membrane-directed lipoproteins, from the inner membrane to the periplasmic chaperone, LolA. Responsible for the formation of the LolA-lipoprotein complex in an ATP-dependent manner. This Rickettsia prowazekii (strain Madrid E) protein is Lipoprotein-releasing system ATP-binding protein LolD.